A 450-amino-acid polypeptide reads, in one-letter code: Glucose-6-phosphate isomerase (450 aa).

Glu-291 serves as the catalytic Proton donor. Catalysis depends on residues His-312 and Lys-426.

The protein belongs to the GPI family.

The protein localises to the cytoplasm. It carries out the reaction alpha-D-glucose 6-phosphate = beta-D-fructose 6-phosphate. The protein operates within carbohydrate biosynthesis; gluconeogenesis. It functions in the pathway carbohydrate degradation; glycolysis; D-glyceraldehyde 3-phosphate and glycerone phosphate from D-glucose: step 2/4. Catalyzes the reversible isomerization of glucose-6-phosphate to fructose-6-phosphate. In Clostridium botulinum (strain Loch Maree / Type A3), this protein is Glucose-6-phosphate isomerase.